The primary structure comprises 381 residues: Queuine tRNA-ribosyltransferase (381 aa).

The active-site Proton acceptor is the Asp96. Substrate contacts are provided by residues 96–100 (DSGGF), Asp150, Gln193, and Gly220. The segment at 251 to 257 (GVGSPDA) is RNA binding. Asp270 serves as the catalytic Nucleophile. Residues 275-279 (TRIAR) are RNA binding; important for wobble base 34 recognition. Zn(2+) contacts are provided by Cys308, Cys310, Cys313, and His339.

The protein belongs to the queuine tRNA-ribosyltransferase family. As to quaternary structure, homodimer. Within each dimer, one monomer is responsible for RNA recognition and catalysis, while the other monomer binds to the replacement base PreQ1. Requires Zn(2+) as cofactor.

It carries out the reaction 7-aminomethyl-7-carbaguanine + guanosine(34) in tRNA = 7-aminomethyl-7-carbaguanosine(34) in tRNA + guanine. The protein operates within tRNA modification; tRNA-queuosine biosynthesis. Its function is as follows. Catalyzes the base-exchange of a guanine (G) residue with the queuine precursor 7-aminomethyl-7-deazaguanine (PreQ1) at position 34 (anticodon wobble position) in tRNAs with GU(N) anticodons (tRNA-Asp, -Asn, -His and -Tyr). Catalysis occurs through a double-displacement mechanism. The nucleophile active site attacks the C1' of nucleotide 34 to detach the guanine base from the RNA, forming a covalent enzyme-RNA intermediate. The proton acceptor active site deprotonates the incoming PreQ1, allowing a nucleophilic attack on the C1' of the ribose to form the product. After dissociation, two additional enzymatic reactions on the tRNA convert PreQ1 to queuine (Q), resulting in the hypermodified nucleoside queuosine (7-(((4,5-cis-dihydroxy-2-cyclopenten-1-yl)amino)methyl)-7-deazaguanosine). The protein is Queuine tRNA-ribosyltransferase of Bacillus subtilis (strain 168).